Consider the following 177-residue polypeptide: ATP synthase subunit delta (177 aa).

The protein belongs to the ATPase delta chain family. As to quaternary structure, F-type ATPases have 2 components, F(1) - the catalytic core - and F(0) - the membrane proton channel. F(1) has five subunits: alpha(3), beta(3), gamma(1), delta(1), epsilon(1). F(0) has three main subunits: a(1), b(2) and c(10-14). The alpha and beta chains form an alternating ring which encloses part of the gamma chain. F(1) is attached to F(0) by a central stalk formed by the gamma and epsilon chains, while a peripheral stalk is formed by the delta and b chains.

The protein resides in the cell inner membrane. Its function is as follows. F(1)F(0) ATP synthase produces ATP from ADP in the presence of a proton or sodium gradient. F-type ATPases consist of two structural domains, F(1) containing the extramembraneous catalytic core and F(0) containing the membrane proton channel, linked together by a central stalk and a peripheral stalk. During catalysis, ATP synthesis in the catalytic domain of F(1) is coupled via a rotary mechanism of the central stalk subunits to proton translocation. Functionally, this protein is part of the stalk that links CF(0) to CF(1). It either transmits conformational changes from CF(0) to CF(1) or is implicated in proton conduction. This Psychromonas ingrahamii (strain DSM 17664 / CCUG 51855 / 37) protein is ATP synthase subunit delta.